Here is a 172-residue protein sequence, read N- to C-terminus: Cytochrome b6-f complex iron-sulfur subunit (172 aa).

A helical transmembrane segment spans residues 19–39; that stretch reads LNALLSGSVGVVVVGALYPVV. The Rieske domain occupies 61-161; sequence GKPISVSELL…ATVDGDNVRF (101 aa). Residues cysteine 107, histidine 109, cysteine 125, and histidine 128 each coordinate [2Fe-2S] cluster. A disulfide bond links cysteine 112 and cysteine 127.

The protein belongs to the Rieske iron-sulfur protein family. As to quaternary structure, the 4 large subunits of the cytochrome b6-f complex are cytochrome b6, subunit IV (17 kDa polypeptide, PetD), cytochrome f and the Rieske protein, while the 4 small subunits are PetG, PetL, PetM and PetN. The complex functions as a dimer. Requires [2Fe-2S] cluster as cofactor.

Its subcellular location is the cellular thylakoid membrane. The catalysed reaction is 2 oxidized [plastocyanin] + a plastoquinol + 2 H(+)(in) = 2 reduced [plastocyanin] + a plastoquinone + 4 H(+)(out). Functionally, component of the cytochrome b6-f complex, which mediates electron transfer between photosystem II (PSII) and photosystem I (PSI), cyclic electron flow around PSI, and state transitions. This Synechococcus sp. (strain JA-2-3B'a(2-13)) (Cyanobacteria bacterium Yellowstone B-Prime) protein is Cytochrome b6-f complex iron-sulfur subunit.